The sequence spans 398 residues: Nonsense-mediated decay protein 4 (398 aa).

The tract at residues P327–R355 is disordered. Residues K335 to R350 are compositionally biased toward basic residues.

Its subcellular location is the cytoplasm. Functionally, involved in nonsense-mediated decay of mRNAs containing premature stop codons. This is Nonsense-mediated decay protein 4 (NMD4) from Candida albicans (strain SC5314 / ATCC MYA-2876) (Yeast).